A 252-amino-acid polypeptide reads, in one-letter code: Tabinhibitin 9 (252 aa).

Residues 1 to 23 form the signal peptide; it reads MTSNLYYVLISPYSLAYMVQYRS. The Cell attachment site signature appears at 32–34; sequence RGD. The 145-residue stretch at 63-207 folds into the SCP domain; the sequence is YIRSTMCEIM…KARAFFTCNF (145 aa).

Belongs to the CRISP family. As to expression, expressed in salivary glands.

Its subcellular location is the secreted. Functionally, inhibits platelet aggregation induced by all agonists tested (ADP, arachidonic acid, the thromboxane A2 analog U46619, thrombin, and snake venom snaclecs (TMVA that activates platelet through GPIB, and stejnulxin that specifically acts through GPVI (GP6))). May act by competing with fibrinogen for binding to glycoprotein IIb/IIIa (ITGA2B/ITGB3). The polypeptide is Tabinhibitin 9 (Tabanus yao (Horsefly)).